Reading from the N-terminus, the 289-residue chain is Protease HtpX homolog (289 aa).

Helical transmembrane passes span 11 to 31 (AALF…IAAG) and 34 to 54 (STTP…YGYW). A Zn(2+)-binding site is contributed by H138. Residue E139 is part of the active site. H142 provides a ligand contact to Zn(2+). Helical transmembrane passes span 152–172 (SVVA…LIFG) and 182–202 (LATI…QMAI). E207 lines the Zn(2+) pocket.

Belongs to the peptidase M48B family. The cofactor is Zn(2+).

Its subcellular location is the cell membrane. This Paenarthrobacter aurescens (strain TC1) protein is Protease HtpX homolog.